The primary structure comprises 422 residues: Isocitrate dehydrogenase [NADP] (422 aa).

Thr94 serves as a coordination point for NADP(+). The D-threo-isocitrate site is built by Ser103, Asn105, Arg109, Arg119, and Arg143. Residue Asp310 coordinates Mg(2+). NADP(+) contacts are provided by residues 344-350, Asn357, Tyr396, and Arg400; that span reads HGTAPKY.

This sequence belongs to the isocitrate and isopropylmalate dehydrogenases family. In terms of assembly, homodimer. Mg(2+) is required as a cofactor. The cofactor is Mn(2+).

It catalyses the reaction D-threo-isocitrate + NADP(+) = 2-oxoglutarate + CO2 + NADPH. Functionally, catalyzes the oxidative decarboxylation of isocitrate to 2-oxoglutarate and carbon dioxide with the concomitant reduction of NADP(+). The chain is Isocitrate dehydrogenase [NADP] (icd) from Staphylococcus aureus (strain COL).